The chain runs to 509 residues: uncharacterized protein (509 aa).

One can recognise an RNase NYN domain in the interval 358-480 (RRIVIIDAIS…IIPFIVENGE (123 aa)).

This is an uncharacterized protein from Methanocaldococcus jannaschii (strain ATCC 43067 / DSM 2661 / JAL-1 / JCM 10045 / NBRC 100440) (Methanococcus jannaschii).